The primary structure comprises 485 residues: E3 ubiquitin-protein ligase TRIM68 (485 aa).

The RING-type zinc-finger motif lies at 16-61 (CPICMTFLREPMSIDCGHSFCHSCLSGLWEIPGESQNWGYTCPLCR). The segment at 93-134 (LKGDLCERHGEKLKMFCKEDVLIMCEACSQSPEHEAHSVVPM) adopts a B box-type zinc-finger fold. Zn(2+) contacts are provided by Cys-98, His-101, Cys-120, and His-126. Residues 207-239 (AEVAAALASLQREAAETMQKLELNHSELIQQSQ) are a coiled coil. Residues 285–481 (LKTDCRVLGL…NTAPLAICSL (197 aa)) enclose the B30.2/SPRY domain.

The protein belongs to the TRIM/RBCC family. Interacts with AR/androgen receptor (via ligand-binding domain). Interacts with KAT5/TIP60. Auto-ubiquitinated. Widely expressed. Expressed at high levels in prostate cancer cell lines. Up-regulation could be restricted to androgen-dependent cells.

The protein resides in the cytoplasm. It localises to the perinuclear region. It is found in the nucleus. It carries out the reaction S-ubiquitinyl-[E2 ubiquitin-conjugating enzyme]-L-cysteine + [acceptor protein]-L-lysine = [E2 ubiquitin-conjugating enzyme]-L-cysteine + N(6)-ubiquitinyl-[acceptor protein]-L-lysine.. It functions in the pathway protein modification; protein ubiquitination. Functionally, functions as a ubiquitin E3 ligase. Acts as a coactivator of androgen receptor (AR) depending on its ubiquitin ligase activity. The polypeptide is E3 ubiquitin-protein ligase TRIM68 (TRIM68) (Homo sapiens (Human)).